A 305-amino-acid polypeptide reads, in one-letter code: UDP-N-acetylenolpyruvoylglucosamine reductase 2 (305 aa).

The FAD-binding PCMH-type domain maps to 33 to 197; sequence VGGKADVFVA…LEARFELEEG (165 aa). Residue arginine 176 is part of the active site. Serine 226 functions as the Proton donor in the catalytic mechanism. Glutamate 296 is an active-site residue.

Belongs to the MurB family. FAD is required as a cofactor.

It localises to the cytoplasm. The catalysed reaction is UDP-N-acetyl-alpha-D-muramate + NADP(+) = UDP-N-acetyl-3-O-(1-carboxyvinyl)-alpha-D-glucosamine + NADPH + H(+). It participates in cell wall biogenesis; peptidoglycan biosynthesis. Its function is as follows. Cell wall formation. The polypeptide is UDP-N-acetylenolpyruvoylglucosamine reductase 2 (Bacillus cereus (strain ATCC 10987 / NRS 248)).